The following is a 247-amino-acid chain: Probable 2-phosphosulfolactate phosphatase (247 aa).

It belongs to the ComB family. It depends on Mg(2+) as a cofactor.

It carries out the reaction (2R)-O-phospho-3-sulfolactate + H2O = (2R)-3-sulfolactate + phosphate. The chain is Probable 2-phosphosulfolactate phosphatase from Clostridium perfringens (strain SM101 / Type A).